Here is a 221-residue protein sequence, read N- to C-terminus: Proteasome subunit beta type-1 (221 aa).

The protein belongs to the peptidase T1B family. The 26S proteasome consists of a 20S proteasome core and two 19S regulatory subunits. The 20S proteasome core is composed of 28 subunits that are arranged in four stacked rings, resulting in a barrel-shaped structure. The two end rings are each formed by seven alpha subunits, and the two central rings are each formed by seven beta subunits. The catalytic chamber with the active sites is on the inside of the barrel.

The protein localises to the cytoplasm. The protein resides in the nucleus. Functionally, non-catalytic component of the proteasome, a multicatalytic proteinase complex which is characterized by its ability to cleave peptides with Arg, Phe, Tyr, Leu, and Glu adjacent to the leaving group at neutral or slightly basic pH. The proteasome has an ATP-dependent proteolytic activity. The protein is Proteasome subunit beta type-1 (PBF1) of Oryza sativa subsp. japonica (Rice).